A 359-amino-acid polypeptide reads, in one-letter code: 4-galactosyl-N-acetylglucosaminide 3-alpha-L-fucosyltransferase 9 (359 aa).

At 1–11 the chain is on the cytoplasmic side; that stretch reads MTSASKGILRP. A helical; Signal-anchor for type II membrane protein membrane pass occupies residues 12-32; it reads FLIVCIILACSMVCLFIYIKP. The Lumenal portion of the chain corresponds to 33-359; that stretch reads TNSWIFSPME…VGNLEKWFWN (327 aa). An N-linked (GlcNAc...) asparagine glycan is attached at asparagine 62. Residues 63–168 are acceptor-binding; that stretch reads ETTILIWVWP…RRDSDIQVPY (106 aa). Residue glutamine 75 coordinates a beta-D-galactosyl-(1-&gt;4)-N-acetyl-beta-D-glucosaminyl derivative. Intrachain disulfides connect cysteine 82-cysteine 335, cysteine 91-cysteine 338, and cysteine 190-cysteine 238. An N-linked (GlcNAc...) asparagine glycan is attached at asparagine 101. Glutamate 137 contributes to the a beta-D-galactosyl-(1-&gt;4)-N-acetyl-beta-D-glucosaminyl derivative binding site. Glutamate 137 serves as the catalytic Nucleophile. Position 137 (glutamate 137) interacts with GDP-beta-L-fucose. An N-linked (GlcNAc...) asparagine glycan is attached at asparagine 153. Positions 168, 192, 194, 195, 202, 226, 241, 246, 252, 255, and 256 each coordinate GDP-beta-L-fucose. The donor-binding stretch occupies residues 169–326; the sequence is GFLTVSTNPF…NWRKDFTVNL (158 aa). The segment at 327–359 is acceptor-binding; the sequence is PRFWESHACLACDHVKRHQEYKSVGNLEKWFWN.

It belongs to the glycosyltransferase 10 family. In terms of assembly, homodimer. Post-translationally, N-glycosylated with complex-type N-glycans.

It localises to the golgi apparatus. The protein localises to the trans-Golgi network membrane. The protein resides in the golgi apparatus membrane. The enzyme catalyses a beta-D-galactosyl-(1-&gt;4)-N-acetyl-beta-D-glucosaminyl derivative + GDP-beta-L-fucose = a beta-D-galactosyl-(1-&gt;4)-[alpha-L-fucosyl-(1-&gt;3)]-N-acetyl-beta-D-glucosaminyl derivative + GDP + H(+). The catalysed reaction is an alpha-Neu5Ac-(2-&gt;3)-beta-D-Gal-(1-&gt;4)-beta-D-GlcNAc-(1-&gt;3)-beta-D-Gal-(1-&gt;4)-beta-D-GlcNAc derivative + GDP-beta-L-fucose = an alpha-Neu5Ac-(2-&gt;3)-beta-D-Gal-(1-&gt;4)-beta-D-GlcNAc-(1-&gt;3)-beta-D-Gal-(1-&gt;4)-[alpha-L-Fuc-(1-&gt;3)]-beta-D-GlcNAc derivative + GDP + H(+). It carries out the reaction alpha-N-glycoloylneuraminosyl-(2-&gt;3)-beta-D-galactosyl-(1-&gt;4)-N-acetyl-beta-D-glucosaminyl-(1-&gt;3)-beta-D-galactosyl-(1-&gt;4)-N-acetyl-beta-D-glucosaminyl-(1-&gt;3)-beta-D-galactosyl-(1-&gt;4)-beta-D-glucosyl-(1&lt;-&gt;1')-ceramide + GDP-beta-L-fucose = alpha-N-glycoloylneuraminosyl-(2-&gt;3)-beta-D-galactosyl-(1-&gt;4)-N-acetyl-beta-D-glucosaminyl-(1-&gt;3)-beta-D-galactosyl-(1-&gt;4)-[alpha-L-fucosyl-(1-&gt;3)]-N-acetyl-beta-D-glucosaminyl-(1-&gt;3)-beta-D-galactosyl-(1-&gt;4)-beta-D-glucosyl-(1&lt;-&gt;1')-ceramide + GDP + H(+). It catalyses the reaction alpha-D-galactosyl-(1-&gt;3)-beta-D-galactosyl-(1-&gt;4)-N-acetyl-beta-D-glucosaminyl-(1-&gt;3)-beta-D-galactosyl-(1-&gt;4)-beta-D-glucosyl-(1&lt;-&gt;1')-ceramide + GDP-beta-L-fucose = a neolactoside IV(3)-alpha-Gal,III(3)-alpha-Fuc-nLc4Cer + GDP + H(+). The enzyme catalyses a neolactoside nLc4Cer + GDP-beta-L-fucose = a neolactoside III(3)-alpha-Fuc-nLc4Cer + GDP + H(+). The catalysed reaction is an N-acetyl-alpha-neuraminyl-(2-&gt;3)-beta-D-galactosyl-(1-&gt;4)-N-acetyl-beta-D-glucosaminyl derivative + GDP-beta-L-fucose = an alpha-Neu5Ac-(2-&gt;3)-beta-D-Gal-(1-&gt;4)-[alpha-L-Fuc-(1-&gt;3)]-beta-D-GlcNAc derivative + GDP + H(+). It carries out the reaction beta-D-Gal-(1-&gt;4)-beta-D-GlcNAc-(1-&gt;3)-beta-D-Gal-(1-&gt;4)-D-Glc + GDP-beta-L-fucose = beta-D-Gal-(1-&gt;4)-[alpha-L-Fuc-(1-&gt;3)]-beta-D-GlcNAc-(1-&gt;3)-beta-D-Gal-(1-&gt;4)-D-Glc + GDP + H(+). It catalyses the reaction an alpha-L-Fuc-(1-&gt;2)-beta-D-Gal-(1-&gt;4)-beta-D-GlcNAc derivative + GDP-beta-L-fucose = an alpha-L-Fuc-(1-&gt;2)-beta-D-Gal-(1-&gt;4)-[alpha-L-Fuc-(1-&gt;3)]-beta-D-GlcNAc derivative + GDP + H(+). The protein operates within protein modification; protein glycosylation. Its pathway is glycolipid biosynthesis. With respect to regulation, activated by Mn2+. Functionally, catalyzes alpha(1-&gt;3) linkage of fucosyl moiety transferred from GDP-beta-L-fucose to N-acetyl glucosamine (GlcNAc) within type 2 lactosamine (LacNAc, beta-D-Gal-(1-&gt;4)-beta-D-GlcNAc-) glycan attached to glycolipids and N- or O-linked glycoproteins. Fucosylates distal type 2 LacNAc and its fucosylated (H-type 2 LacNAc) and sialylated (sialyl-type 2 LacNAc) derivatives to form Lewis x (Lex) (CD15) and Lewis y (Ley) antigenic epitopes involved in cell adhesion and differentiation. Generates Lex epitopes in the brain, presumably playing a role in the maintenance of neuronal stemness and neurite outgrowth in progenitor neural cells. Fucosylates the internal type 2 LacNAc unit of the polylactosamine chain to form VIM-2 antigen that serves as recognition epitope for SELE. Can also modify milk oligosaccharides in particular type 2 tetrasaccharide LNnT. The sequence is that of 4-galactosyl-N-acetylglucosaminide 3-alpha-L-fucosyltransferase 9 from Bos taurus (Bovine).